Here is a 308-residue protein sequence, read N- to C-terminus: tRNA pseudouridine synthase B (308 aa).

The Nucleophile role is filled by Asp45.

This sequence belongs to the pseudouridine synthase TruB family. Type 1 subfamily.

It carries out the reaction uridine(55) in tRNA = pseudouridine(55) in tRNA. In terms of biological role, responsible for synthesis of pseudouridine from uracil-55 in the psi GC loop of transfer RNAs. In Gloeothece citriformis (strain PCC 7424) (Cyanothece sp. (strain PCC 7424)), this protein is tRNA pseudouridine synthase B.